The sequence spans 337 residues: DNA-directed RNA polymerase subunit alpha (337 aa).

Positions 1–233 (MVREKVRVST…DLFIPFLHAE (233 aa)) are alpha N-terminal domain (alpha-NTD). The segment at 267-337 (IALKSIFIDQ…KAFHNPFTEE (71 aa)) is alpha C-terminal domain (alpha-CTD).

The protein belongs to the RNA polymerase alpha chain family. In plastids the minimal PEP RNA polymerase catalytic core is composed of four subunits: alpha, beta, beta', and beta''. When a (nuclear-encoded) sigma factor is associated with the core the holoenzyme is formed, which can initiate transcription.

The protein resides in the plastid. The protein localises to the chloroplast. The enzyme catalyses RNA(n) + a ribonucleoside 5'-triphosphate = RNA(n+1) + diphosphate. In terms of biological role, DNA-dependent RNA polymerase catalyzes the transcription of DNA into RNA using the four ribonucleoside triphosphates as substrates. This Eucalyptus globulus subsp. globulus (Tasmanian blue gum) protein is DNA-directed RNA polymerase subunit alpha.